A 208-amino-acid polypeptide reads, in one-letter code: Inner membrane-spanning protein YciB (208 aa).

Helical transmembrane passes span 49–69, 78–98, 105–125, 150–170, and 178–198; these read APVL…ILWL, TMLW…IYFH, WKPT…ELVF, FSWV…AFNF, and FKLF…AFFL.

Belongs to the YciB family.

The protein localises to the cell inner membrane. Its function is as follows. Plays a role in cell envelope biogenesis, maintenance of cell envelope integrity and membrane homeostasis. This is Inner membrane-spanning protein YciB from Polaromonas naphthalenivorans (strain CJ2).